The sequence spans 931 residues: 3'-5' exonuclease DinG (931 aa).

One can recognise an Exonuclease domain in the interval 7 to 162 (VVIDVETTGN…DSDAEVTGLI (156 aa)). The 261-residue stretch at 250-510 (LSELMPGYEK…KKMRQLFQRN (261 aa)) folds into the Helicase ATP-binding domain. 284 to 291 (APPGIGKT) is a binding site for ATP. The DEAH box signature appears at 462–465 (DEAH). Residues 741-897 (DTARYIELMA…TIIILDRRIK (157 aa)) enclose the Helicase C-terminal domain.

It belongs to the helicase family. DinG subfamily. Type 2 sub-subfamily.

Its subcellular location is the cytoplasm. Its function is as follows. 3'-5' exonuclease. The sequence is that of 3'-5' exonuclease DinG from Bacillus subtilis (strain 168).